Here is a 339-residue protein sequence, read N- to C-terminus: Transcription initiation factor IIB (339 aa).

The segment at 39 to 70 (EELICPVCGSKSIIKDYERAEIVCEMCGCVLQ) adopts a TFIIB-type zinc-finger fold. The Zn(2+) site is built by Cys43, Cys46, Cys62, and Cys65. 2 tandem repeats follow at residues 156–239 (SELD…SREL) and 250–331 (DYVP…ELTE).

Belongs to the TFIIB family.

Functionally, stabilizes TBP binding to an archaeal box-A promoter. Also responsible for recruiting RNA polymerase II to the pre-initiation complex (DNA-TBP-TFIIB). This is Transcription initiation factor IIB from Methanococcus maripaludis (strain C5 / ATCC BAA-1333).